The chain runs to 303 residues: Deoxyhypusine hydroxylase (303 aa).

Residue methionine 1 is modified to N-acetylmethionine. HEAT-like PBS-type repeat units lie at residues 23–49 (ARFR…AFDD), 54–80 (LKHE…VLRD), 87–113 (VRHE…YSTD), 175–201 (DRYR…GLRC), 206–232 (FRHE…ALAQ), and 239–265 (VRHE…HVAD). Fe cation contacts are provided by histidine 56, histidine 89, and glutamate 90. Residues histidine 208, histidine 241, and glutamate 242 each coordinate Fe cation.

This sequence belongs to the deoxyhypusine hydroxylase family. The cofactor is Fe(2+).

It catalyses the reaction [eIF5A protein]-deoxyhypusine + AH2 + O2 = [eIF5A protein]-hypusine + A + H2O. The protein operates within protein modification; eIF5A hypusination. Catalyzes the hydroxylation of the N(6)-(4-aminobutyl)-L-lysine intermediate produced by deoxyhypusine synthase/DHPS on a critical lysine of the eukaryotic translation initiation factor 5A/eIF-5A. This is the second step of the post-translational modification of that lysine into an unusual amino acid residue named hypusine. Hypusination is unique to mature eIF-5A factor and is essential for its function. In Bos taurus (Bovine), this protein is Deoxyhypusine hydroxylase.